The sequence spans 474 residues: Probable protein phosphatase 2C 37 (474 aa).

The disordered stretch occupies residues 1–90 (MVMASAGVNM…RDDDGCSSTA (90 aa)). Residues 57 to 77 (LPASSASPSPSPTSSAASSDC) show a composition bias toward low complexity. Positions 113-470 (AFGSVSLAGR…DNISVVVIDL (358 aa)) constitute a PPM-type phosphatase domain. The Mn(2+) site is built by Asp-152, Gly-153, and Asp-387. A disordered region spans residues 406 to 434 (LEDGSPTSGRRAARSGEAASSSAGAPAAA). The segment covering 420 to 434 (SGEAASSSAGAPAAA) has biased composition (low complexity). Asp-461 contacts Mn(2+).

The protein belongs to the PP2C family. It depends on Mg(2+) as a cofactor. Requires Mn(2+) as cofactor.

The catalysed reaction is O-phospho-L-seryl-[protein] + H2O = L-seryl-[protein] + phosphate. The enzyme catalyses O-phospho-L-threonyl-[protein] + H2O = L-threonyl-[protein] + phosphate. The protein is Probable protein phosphatase 2C 37 of Oryza sativa subsp. japonica (Rice).